The primary structure comprises 248 residues: 3-deoxy-manno-octulosonate cytidylyltransferase (248 aa).

This sequence belongs to the KdsB family.

It localises to the cytoplasm. It catalyses the reaction 3-deoxy-alpha-D-manno-oct-2-ulosonate + CTP = CMP-3-deoxy-beta-D-manno-octulosonate + diphosphate. It participates in nucleotide-sugar biosynthesis; CMP-3-deoxy-D-manno-octulosonate biosynthesis; CMP-3-deoxy-D-manno-octulosonate from 3-deoxy-D-manno-octulosonate and CTP: step 1/1. The protein operates within bacterial outer membrane biogenesis; lipopolysaccharide biosynthesis. In terms of biological role, activates KDO (a required 8-carbon sugar) for incorporation into bacterial lipopolysaccharide in Gram-negative bacteria. The protein is 3-deoxy-manno-octulosonate cytidylyltransferase of Klebsiella pneumoniae subsp. pneumoniae (strain ATCC 700721 / MGH 78578).